A 1803-amino-acid polypeptide reads, in one-letter code: Pyruvate dehydrogenase [NADP(+)], mitochondrial (1803 aa).

The N-terminal 37 residues, 1–37 (MKQSVRPIISNVLRKEVALYSTIIGQDKGKEPTGRTY), are a transit peptide targeting the mitochondrion. 2 consecutive 4Fe-4S ferredoxin-type domains span residues 747 to 776 (FIPQ…PFVL) and 802 to 831 (FRIQ…MTDA). Residues Cys-756, Cys-759, Cys-762, Cys-766, Cys-811, Cys-814, Cys-817, and Cys-821 each coordinate [4Fe-4S] cluster. Residues 1248–1391 (VTILYGSETG…GFNNWIPSVW (144 aa)) form the Flavodoxin-like domain. Residues 1425 to 1650 (KSTPVLSITG…IHPTAMEFPD (226 aa)) form the FAD-binding FR-type domain. FAD contacts are provided by residues 1458–1469 (YQVGDSLGVFPE) and 1585–1595 (IKPRYYSISSA).

In the N-terminal section; belongs to the pyruvate:ferredoxin/flavodoxin oxidoreductase family. Homodimer. It depends on FAD as a cofactor. The cofactor is FMN. Requires thiamine diphosphate as cofactor. Iron-sulfur cluster is required as a cofactor.

The protein localises to the mitochondrion. It carries out the reaction pyruvate + NADP(+) + CoA = acetyl-CoA + CO2 + NADPH. In terms of biological role, pyruvate dehydrogenase [NADP(+)] is one of three enzymes participating in respiratory metabolism. The enzyme is also active with 2-oxobutyrate and oxaloacetate. The enzyme is oxygen sensitive. The chain is Pyruvate dehydrogenase [NADP(+)], mitochondrial (PNO) from Euglena gracilis.